A 129-amino-acid chain; its full sequence is Succinate dehydrogenase assembly factor 3, mitochondrial (129 aa).

A mitochondrion-targeting transit peptide spans 1 to 21 (MQVNHLLRQAVKQTTRAGRLG).

Belongs to the complex I LYR family. SDHAF3 subfamily. Interacts with the iron-sulfur protein subunit within the SDH catalytic dimer.

It is found in the mitochondrion matrix. In terms of biological role, plays an essential role in the assembly of succinate dehydrogenase (SDH), an enzyme complex (also referred to as respiratory complex II) that is a component of both the tricarboxylic acid (TCA) cycle and the mitochondrial electron transport chain, and which couples the oxidation of succinate to fumarate with the reduction of ubiquinone (coenzyme Q) to ubiquinol. Promotes maturation of the iron-sulfur protein subunit of the SDH catalytic dimer, protecting it from the deleterious effects of oxidants. May act together with SDHAF1. This Kluyveromyces lactis (strain ATCC 8585 / CBS 2359 / DSM 70799 / NBRC 1267 / NRRL Y-1140 / WM37) (Yeast) protein is Succinate dehydrogenase assembly factor 3, mitochondrial.